Here is a 347-residue protein sequence, read N- to C-terminus: Protein RecA (347 aa).

Residue 65-72 participates in ATP binding; it reads GPESSGKT.

It belongs to the RecA family.

It is found in the cytoplasm. Its function is as follows. Can catalyze the hydrolysis of ATP in the presence of single-stranded DNA, the ATP-dependent uptake of single-stranded DNA by duplex DNA, and the ATP-dependent hybridization of homologous single-stranded DNAs. It interacts with LexA causing its activation and leading to its autocatalytic cleavage. In Aliivibrio salmonicida (strain LFI1238) (Vibrio salmonicida (strain LFI1238)), this protein is Protein RecA.